We begin with the raw amino-acid sequence, 344 residues long: Holliday junction branch migration complex subunit RuvB (344 aa).

Positions 1–25 (MTDSDPTLRPDRLPEDVQATDDRAL) are enriched in basic and acidic residues. Positions 1–33 (MTDSDPTLRPDRLPEDVQATDDRALRPQSLDDF) are disordered. The segment at 1–186 (MTDSDPTLRP…FGIPTRLNFY (186 aa)) is large ATPase domain (RuvB-L). Residues L25, R26, G67, K70, T71, T72, 133–135 (EDF), R176, Y186, and R223 each bind ATP. T71 is a binding site for Mg(2+). Residues 187-257 (TIAELDQIVA…IADSALTRLG (71 aa)) are small ATPAse domain (RuvB-S). Residues 260–344 (DLGLDGADRR…PKRPDQGELI (85 aa)) are head domain (RuvB-H). R296, R315, and R320 together coordinate DNA.

It belongs to the RuvB family. Homohexamer. Forms an RuvA(8)-RuvB(12)-Holliday junction (HJ) complex. HJ DNA is sandwiched between 2 RuvA tetramers; dsDNA enters through RuvA and exits via RuvB. An RuvB hexamer assembles on each DNA strand where it exits the tetramer. Each RuvB hexamer is contacted by two RuvA subunits (via domain III) on 2 adjacent RuvB subunits; this complex drives branch migration. In the full resolvosome a probable DNA-RuvA(4)-RuvB(12)-RuvC(2) complex forms which resolves the HJ.

Its subcellular location is the cytoplasm. The catalysed reaction is ATP + H2O = ADP + phosphate + H(+). In terms of biological role, the RuvA-RuvB-RuvC complex processes Holliday junction (HJ) DNA during genetic recombination and DNA repair, while the RuvA-RuvB complex plays an important role in the rescue of blocked DNA replication forks via replication fork reversal (RFR). RuvA specifically binds to HJ cruciform DNA, conferring on it an open structure. The RuvB hexamer acts as an ATP-dependent pump, pulling dsDNA into and through the RuvAB complex. RuvB forms 2 homohexamers on either side of HJ DNA bound by 1 or 2 RuvA tetramers; 4 subunits per hexamer contact DNA at a time. Coordinated motions by a converter formed by DNA-disengaged RuvB subunits stimulates ATP hydrolysis and nucleotide exchange. Immobilization of the converter enables RuvB to convert the ATP-contained energy into a lever motion, pulling 2 nucleotides of DNA out of the RuvA tetramer per ATP hydrolyzed, thus driving DNA branch migration. The RuvB motors rotate together with the DNA substrate, which together with the progressing nucleotide cycle form the mechanistic basis for DNA recombination by continuous HJ branch migration. Branch migration allows RuvC to scan DNA until it finds its consensus sequence, where it cleaves and resolves cruciform DNA. The sequence is that of Holliday junction branch migration complex subunit RuvB from Jannaschia sp. (strain CCS1).